A 247-amino-acid polypeptide reads, in one-letter code: ATP synthase subunit a, chloroplastic (247 aa).

Helical transmembrane passes span 38-58, 95-115, 134-154, 199-219, and 220-240; these read QVLI…TIAV, VPFI…GALL, INTT…AGLT, LVVV…VMFL, and GLFT…AYIG.

Belongs to the ATPase A chain family. As to quaternary structure, F-type ATPases have 2 components, CF(1) - the catalytic core - and CF(0) - the membrane proton channel. CF(1) has five subunits: alpha(3), beta(3), gamma(1), delta(1), epsilon(1). CF(0) has four main subunits: a, b, b' and c.

The protein localises to the plastid. The protein resides in the chloroplast thylakoid membrane. In terms of biological role, key component of the proton channel; it plays a direct role in the translocation of protons across the membrane. This chain is ATP synthase subunit a, chloroplastic, found in Panax ginseng (Korean ginseng).